Reading from the N-terminus, the 505-residue chain is TBC1 domain family member 22B (505 aa).

Ala-2 carries the post-translational modification N-acetylalanine. Phosphoserine is present on residues Ser-58 and Ser-116. Positions 105-146 (SKLRVKPERSQSTTSDVPANYKVIKSSSDAQLSRNSSDTCLR) are disordered. The span at 129–146 (KSSSDAQLSRNSSDTCLR) shows a compositional bias: polar residues. The residue at position 154 (Ser-154) is a Phosphoserine. The region spanning 210-434 (GVPREVRPIT…RLWDTYQSEP (225 aa)) is the Rab-GAP TBC domain.

Interacts with ACBD3 and ARFGEF1. Interacts with YWHAB, YWHAE, YWHAG, YWHAH, YWHAQ and YWHAZ.

In terms of biological role, may act as a GTPase-activating protein for Rab family protein(s). The chain is TBC1 domain family member 22B (TBC1D22B) from Homo sapiens (Human).